A 763-amino-acid polypeptide reads, in one-letter code: 5-methyltetrahydropteroyltriglutamate--homocysteine methyltransferase (763 aa).

Residues 16–19 and Lys117 each bind 5-methyltetrahydropteroyltri-L-glutamate; that span reads RELK. Residues 440-442 and Glu493 each bind L-homocysteine; that span reads IGS. L-methionine is bound by residues 440–442 and Glu493; that span reads IGS. Residues 524–525 and Trp570 each bind 5-methyltetrahydropteroyltri-L-glutamate; that span reads RC. Position 608 (Asp608) interacts with L-homocysteine. Residue Asp608 participates in L-methionine binding. Residue Glu614 coordinates 5-methyltetrahydropteroyltri-L-glutamate. Zn(2+) is bound by residues His650, Cys652, and Glu674. The active-site Proton donor is the His703. Cys735 contacts Zn(2+).

It belongs to the vitamin-B12 independent methionine synthase family. It depends on Zn(2+) as a cofactor.

It catalyses the reaction 5-methyltetrahydropteroyltri-L-glutamate + L-homocysteine = tetrahydropteroyltri-L-glutamate + L-methionine. The protein operates within amino-acid biosynthesis; L-methionine biosynthesis via de novo pathway; L-methionine from L-homocysteine (MetE route): step 1/1. Catalyzes the transfer of a methyl group from 5-methyltetrahydrofolate to homocysteine resulting in methionine formation. The polypeptide is 5-methyltetrahydropteroyltriglutamate--homocysteine methyltransferase (Alcanivorax borkumensis (strain ATCC 700651 / DSM 11573 / NCIMB 13689 / SK2)).